A 97-amino-acid polypeptide reads, in one-letter code: YcgL domain-containing protein Maqu_1609 (97 aa).

Residues 5–89 enclose the YcgL domain; it reads EFVSVFRSSK…EQDTYIVDFK (85 aa).

This Marinobacter nauticus (strain ATCC 700491 / DSM 11845 / VT8) (Marinobacter aquaeolei) protein is YcgL domain-containing protein Maqu_1609.